The sequence spans 280 residues: 4-deoxy-L-threo-5-hexosulose-uronate ketol-isomerase (280 aa).

Zn(2+)-binding residues include His-198, His-200, Glu-205, and His-247.

It belongs to the KduI family. Zn(2+) serves as cofactor.

It carries out the reaction 5-dehydro-4-deoxy-D-glucuronate = 3-deoxy-D-glycero-2,5-hexodiulosonate. The protein operates within glycan metabolism; pectin degradation; 2-dehydro-3-deoxy-D-gluconate from pectin: step 4/5. Its function is as follows. Catalyzes the isomerization of 5-dehydro-4-deoxy-D-glucuronate to 3-deoxy-D-glycero-2,5-hexodiulosonate. The polypeptide is 4-deoxy-L-threo-5-hexosulose-uronate ketol-isomerase (Bacteroides fragilis (strain YCH46)).